The primary structure comprises 425 residues: MFVDQVKVYVKGGDGGNGAVSFRREKYVPLGGPAGGDGGQGGDVVFVVDEGLRTLVDFRYQRHFKAPRGEHGRNKSQHGAGAEDMVVRVPPGTTVIDDDTKEVIADLVEQGQRAVIAKGGRGGRGNNRFANSSNPAPHISENGEPGQERYIVMELKLIADVGLVGYPSVGKSTLLSSVTAAKPKIAAYHFTTLTPNLGVVDLGERSFVMADLPGLIEGAHEGVGLGHQFLRHVERTRLIVHVIDMAAVDGRDPYEDYLQINRELTLYNLKLEDRPQIVVANKMELPEAEENLRIFKEKAPDVKVYEISAATSKGVQELMYAIGDTLATIPDKPAVEEVAEVEERVVFRAEKEPDAFEITRDNEVFVVSGEKIEKLVRMTNLNSYDAAQRFARQMRSMGVDDALRKLGAKDGDTVRIGKLEFDFVE.

One can recognise an Obg domain in the interval 1 to 158; sequence MFVDQVKVYV…RYIVMELKLI (158 aa). The tract at residues 118-144 is disordered; it reads KGGRGGRGNNRFANSSNPAPHISENGE. The OBG-type G domain maps to 159–327; sequence ADVGLVGYPS…LMYAIGDTLA (169 aa). ATP-binding positions include 165–172, 190–194, 211–214, 281–284, and 308–310; these read GYPSVGKS, FTTLT, DLPG, NKME, and SAA. Residues serine 172 and threonine 192 each coordinate Mg(2+). The OCT domain maps to 348 to 425; sequence RAEKEPDAFE…IGKLEFDFVE (78 aa).

The protein belongs to the TRAFAC class OBG-HflX-like GTPase superfamily. OBG GTPase family. As to quaternary structure, monomer. It depends on Mg(2+) as a cofactor.

It is found in the cytoplasm. An essential GTPase which binds GTP, GDP and possibly (p)ppGpp with moderate affinity, with high nucleotide exchange rates and a fairly low GTP hydrolysis rate. Plays a role in control of the cell cycle, stress response, ribosome biogenesis and in those bacteria that undergo differentiation, in morphogenesis control. The polypeptide is GTPase Obg (Brevibacillus brevis (strain 47 / JCM 6285 / NBRC 100599)).